The chain runs to 196 residues: Pyridoxal 5'-phosphate synthase subunit PdxT (196 aa).

Residue 47 to 49 coordinates L-glutamine; it reads GES. Cysteine 79 serves as the catalytic Nucleophile. L-glutamine-binding positions include arginine 106 and 134 to 135; that span reads IR. Catalysis depends on charge relay system residues histidine 170 and glutamate 172.

Belongs to the glutaminase PdxT/SNO family. In the presence of PdxS, forms a dodecamer of heterodimers. Only shows activity in the heterodimer.

The catalysed reaction is aldehydo-D-ribose 5-phosphate + D-glyceraldehyde 3-phosphate + L-glutamine = pyridoxal 5'-phosphate + L-glutamate + phosphate + 3 H2O + H(+). It carries out the reaction L-glutamine + H2O = L-glutamate + NH4(+). Its pathway is cofactor biosynthesis; pyridoxal 5'-phosphate biosynthesis. In terms of biological role, catalyzes the hydrolysis of glutamine to glutamate and ammonia as part of the biosynthesis of pyridoxal 5'-phosphate. The resulting ammonia molecule is channeled to the active site of PdxS. This chain is Pyridoxal 5'-phosphate synthase subunit PdxT, found in Bacillus licheniformis (strain ATCC 14580 / DSM 13 / JCM 2505 / CCUG 7422 / NBRC 12200 / NCIMB 9375 / NCTC 10341 / NRRL NRS-1264 / Gibson 46).